Consider the following 322-residue polypeptide: uncharacterized protein (322 aa).

Disordered stretches follow at residues methionine 1–alanine 51 and glutamine 107–aspartate 130. The span at leucine 119–aspartate 130 shows a compositional bias: basic and acidic residues.

As to expression, expressed in skin and fetal lung.

This is an uncharacterized protein from Homo sapiens (Human).